The following is a 506-amino-acid chain: Cytochrome P450 4B1 (506 aa).

Residue glutamate 310 coordinates heme. Position 431 is a phosphoserine (serine 431). Cysteine 448 serves as a coordination point for heme.

This sequence belongs to the cytochrome P450 family. Heme is required as a cofactor.

Its subcellular location is the endoplasmic reticulum membrane. The protein localises to the microsome membrane. It carries out the reaction an organic molecule + reduced [NADPH--hemoprotein reductase] + O2 = an alcohol + oxidized [NADPH--hemoprotein reductase] + H2O + H(+). In terms of biological role, cytochromes P450 are a group of heme-thiolate monooxygenases. In liver microsomes, this enzyme is involved in an NADPH-dependent electron transport pathway. It oxidizes a variety of structurally unrelated compounds, including steroids, fatty acids, and xenobiotics. This is Cytochrome P450 4B1 (CYP4B1) from Oryctolagus cuniculus (Rabbit).